We begin with the raw amino-acid sequence, 76 residues long: VpAmp1.0 (76 aa).

An N-terminal signal peptide occupies residues 1-22 (MKLINLVPVFFVLIIVVDYCHS). The residue at position 41 (Ile41) is an Isoleucine amide. A propeptide spanning residues 42 to 76 (GKRSVESQRYVDLNRRDLEQDLQELQDFLDQISEH) is cleaved from the precursor.

It belongs to the non-disulfide-bridged peptide (NDBP) superfamily. Short antimicrobial peptide (group 4) family. Expressed by the venom gland.

The protein resides in the secreted. It is found in the target cell membrane. Antimicrobial peptide with potent activity against Gram-positive bacteria S.aureus (MIC=2.5 uM) and S.agalactiaea (MIC=2.5 uM), and Gram-negative bacteria E.coli (MIC=24 uM) and P.aeruginosa (MIC=2.5 uM), as well as against yeasts Candida albicans (MIC=6.25 uM) and C.glabrata (MIC&gt;50 uM). Also elicits high hemolysis on human erythrocytes (HC(50)=9.2 uM). In Mesomexovis punctatus (Scorpion), this protein is VpAmp1.0.